We begin with the raw amino-acid sequence, 147 residues long: MISLQSDQLLEATVGQFMIEADKVAHVQVGNNLEHALLVLTKTGYTAIPVLDPSYRLHGLIGTNMIMNSIFGLERIEFEKLDQITVEEVMLTDIPRLHINDPIMKGFGMVINNGFVCVENDEQVFEGIFTRRVVLKELNKHIRSLNK.

Residues 18–78 form the CBS domain; the sequence is MIEADKVAHV…SIFGLERIEF (61 aa). 5 residues coordinate 3',3'-c-di-AMP: lysine 23, alanine 25, threonine 46, alanine 47, and arginine 131.

In terms of assembly, homodimer. Forms a homodimer with a parallel, head-to-head assembly of the monomers. Under conditions of potassium starvation and corresponding low c-di-AMP levels, apo-DarB specifically interacts with the N-terminal region of the RelA. Under the same conditions, apo-DarB also specifically interacts with the C-terminal part of the pyruvate carboxylase.

Its activity is regulated as follows. Binds c-di-AMP. Binding of c-di-AMP to DarB inhibits the interaction with RelA and PYC. Its function is as follows. Involved in the c-di-AMP-dependent regulation of the bacterial stringent response. Modulates the activities of at least two enzymes under conditions of potassium limitation. Apo-DarB regulates the activity of the GTP pyrophosphokinase RelA by interacting directly with RelA, leading to stimulation of (p)ppGpp synthesis and induction of the stringent response. Apo-DarB also regulates pyruvate carboxylase (PYC) at two levels: directly at the protein level by binding to the enzyme and stimulating the synthesis of oxaloacetate and indirectly, by interaction with RelA, which leads to activation of the stringent response and to the increased expression of the pycA gene. Stimulation of these enzymes by DarB is prevented in the presence of cyclic di-AMP (c-di-AMP). This Bacillus subtilis (strain 168) protein is Cyclic di-AMP receptor B.